The primary structure comprises 185 residues: Ribosome-recycling factor (185 aa).

Belongs to the RRF family.

It is found in the cytoplasm. In terms of biological role, responsible for the release of ribosomes from messenger RNA at the termination of protein biosynthesis. May increase the efficiency of translation by recycling ribosomes from one round of translation to another. The sequence is that of Ribosome-recycling factor from Corynebacterium diphtheriae (strain ATCC 700971 / NCTC 13129 / Biotype gravis).